Consider the following 537-residue polypeptide: Frizzled-4 (537 aa).

Residues 1-36 form the signal peptide; the sequence is MAWPGTGPSSRGAPGGVGLRLGLLLQFLLLLRPTLG. The Extracellular segment spans residues 37–212; that stretch reads FGDEEERRCD…KCGYDAGLYS (176 aa). The FZ domain occupies 40 to 161; that stretch reads EEERRCDPIR…NDHNHMCMEG (122 aa). Cystine bridges form between Cys-45/Cys-106, Cys-53/Cys-99, Cys-90/Cys-128, Cys-117/Cys-158, Cys-121/Cys-145, Cys-181/Cys-200, Cys-204/Cys-282, and Cys-302/Cys-377. N-linked (GlcNAc...) asparagine glycosylation occurs at Asn-59. Residue Asn-144 is glycosylated (N-linked (GlcNAc...) asparagine). A helical transmembrane segment spans residues 213-243; sequence RSAKEFTDIWMAVWASLCFISTTFTVLTFLI. The Cytoplasmic portion of the chain corresponds to 244-249; sequence DSSRFS. A helical transmembrane segment spans residues 250–275; sequence YPERPIIFLSMCYNIYSIAYIVRLTV. At 276 to 299 the chain is on the extracellular side; it reads GRERISCDFEEAAEPVLIQEGLKN. The helical transmembrane segment at 300 to 333 threads the bilayer; it reads TGCAIIFLLMYFFGMASSIWWVILTLTWFLAAGL. The Cytoplasmic portion of the chain corresponds to 334-336; the sequence is KWG. The helical transmembrane segment at 337-365 threads the bilayer; sequence HEAIEMHSSYFHIAAWAIPAVKTIVILIM. The Extracellular segment spans residues 366–383; the sequence is RLVDADELTGLCYVGNQN. The helical transmembrane segment at 384–410 threads the bilayer; it reads LDALTGFVVAPLFTYLVIGTLFIAAGL. Residues 411-431 are Cytoplasmic-facing; it reads VALFKIRSNLQKDGTKTDKLE. The chain crosses the membrane as a helical span at residues 432 to 460; sequence RLMVKIGVFSVLYTVPATCVIACYFYEIS. Residues 461–473 are Extracellular-facing; it reads NWALFRYSADDSN. The chain crosses the membrane as a helical span at residues 474-495; the sequence is MAVEMLKIFMSLLVGITSGMWI. Topologically, residues 496–537 are cytoplasmic; it reads WSAKTLHTWQKCSNRLVNSGKVKREKRGNGWVKPGKGNETVV. The Lys-Thr-X-X-X-Trp motif, mediates interaction with the PDZ domain of Dvl family members motif lies at 499-504; the sequence is KTLHTW. Positions 535–537 match the PDZ-binding motif; sequence TVV.

Belongs to the G-protein coupled receptor Fz/Smo family. In terms of assembly, interacts with MAGI3 and NDP. Component of a complex, at least composed of TSPAN12, FZD4 and norrin (NDP). Interacts (via FZ domain) with TSKU; TSKU competes with WNT2B for binding to FZD4, inhibiting Wnt signaling and repressing peripheral eye development. Interacts with glypican GPC3. Ubiquitinated by ZNRF3, leading to its degradation by the proteasome. In terms of tissue distribution, expressed in chondrocytes.

It localises to the cell membrane. Functionally, receptor for Wnt proteins. Most frizzled receptors are coupled to the beta-catenin (CTNNB1) canonical signaling pathway, which leads to the activation of disheveled proteins, inhibition of GSK-3 kinase, nuclear accumulation of beta-catenin (CTNNB1) and activation of Wnt target genes. Plays a critical role in retinal vascularization by acting as a receptor for Wnt proteins and norrin (NDP). In retina, it can be activated by Wnt protein-binding and also by Wnt-independent signaling via binding of norrin (NDP), promoting in both cases beta-catenin (CTNNB1) accumulation and stimulation of LEF/TCF-mediated transcriptional programs. A second signaling pathway involving PKC and calcium fluxes has been seen for some family members, but it is not yet clear if it represents a distinct pathway or if it can be integrated in the canonical pathway, as PKC seems to be required for Wnt-mediated inactivation of GSK-3 kinase. Both pathways seem to involve interactions with G-proteins. May be involved in transduction and intercellular transmission of polarity information during tissue morphogenesis and/or in differentiated tissues. Activation by Wnt5A stimulates PKC activity via a G-protein-dependent mechanism. The sequence is that of Frizzled-4 (Fzd4) from Mus musculus (Mouse).